The sequence spans 589 residues: Vesicular glutamate transporter 3 (589 aa).

At 1 to 76 (MPFKAFDTFK…CHCCGLPKRY (76 aa)) the chain is on the cytoplasmic side. The span at 40–49 (TEEEDNIELN) shows a compositional bias: acidic residues. Residues 40–61 (TEEEDNIELNEEGRPVQTSRPS) form a disordered region. Residues 77–97 (IIAIMSGLGFCISFGIRCNLG) form a helical membrane-spanning segment. Residues 98-130 (VAIVEMVNNSTVYVDGKPEIQTAQFNWDPETVG) lie on the Vesicular side of the membrane. Asn-106 carries an N-linked (GlcNAc...) asparagine glycan. The helical transmembrane segment at 131-151 (LIHGSFFWGYIMTQIPGGFIS) threads the bilayer. Over 152-153 (NK) the chain is Cytoplasmic. Residues 154–174 (FAANRVFGAAIFLTSTLNMFI) traverse the membrane as a helical segment. Residues 175–182 (PSAARVHY) lie on the Vesicular side of the membrane. Residues 183–203 (GCVMCVRILQGLVEGVTYPAC) traverse the membrane as a helical segment. Residues 204 to 221 (HGMWSKWAPPLERSRLAT) are Cytoplasmic-facing. A helical transmembrane segment spans residues 222–242 (TSFCGSYAGAVVAMPLAGVLV). Topologically, residues 243–249 (QYIGWSS) are vesicular. The helical transmembrane segment at 250–270 (VFYIYGMFGIIWYMFWLLQAY) threads the bilayer. Topologically, residues 271-314 (ECPAAHPTISNEEKTYIETSIGEGANVVSLSKFSTPWKRFFTSL) are cytoplasmic. The helical transmembrane segment at 315–335 (PVYAIIVANFCRSWTFYLLLI) threads the bilayer. At 336-353 (SQPAYFEEVFGFAISKVG) the chain is on the vesicular side. A helical transmembrane segment spans residues 354 to 374 (LLSAVPHMVMTIVVPIGGQLA). The Cytoplasmic portion of the chain corresponds to 375–390 (DYLRSRQILTTTAVRK). The chain crosses the membrane as a helical span at residues 391–411 (IMNCGGFGMEATLLLVVGFSH). Residues 412–413 (TK) are Vesicular-facing. Residues 414 to 434 (GVAISFLVLAVGFSGFAISGF) traverse the membrane as a helical segment. The Cytoplasmic portion of the chain corresponds to 435-447 (NVNHLDIAPRYAS). The chain crosses the membrane as a helical span at residues 448 to 468 (ILMGISNGVGTLSGMVCPLIV). Over 469–481 (GAMTRHKTREEWQ) the chain is Vesicular. The helical transmembrane segment at 482-502 (NVFLIAALVHYSGVIFYGVFA) threads the bilayer. Residues 503-586 (SGEKQEWADP…SYQNEERNFS (84 aa)) lie on the Cytoplasmic side of the membrane. Residues 559–589 (KKEWKGQRGATLDEEELTSYQNEERNFSTIS) form a disordered region. The span at 580–589 (NEERNFSTIS) shows a compositional bias: basic and acidic residues.

The protein belongs to the major facilitator superfamily. Sodium/anion cotransporter family. VGLUT subfamily. Expressed in amygdala, cerebellum, hippocampus, medulla, spinal cord and thalamus.

The protein localises to the cytoplasmic vesicle. The protein resides in the secretory vesicle. It is found in the synaptic vesicle membrane. It localises to the cell membrane. Its subcellular location is the synapse. The protein localises to the synaptosome. The enzyme catalyses L-glutamate(out) = L-glutamate(in). It carries out the reaction 3 Na(+)(out) + phosphate(out) = 3 Na(+)(in) + phosphate(in). It catalyses the reaction chloride(in) = chloride(out). Its activity is regulated as follows. The L-glutamate uniporter activity exhibits a biphasic dependence on chloride concentration. Chloride channel activity is allosterically activated by lumenal H(+) and Cl(-) leading to synaptic vesicles acidification. The glutamate transport activity is allosterically activated by lumenal H(+) and Cl(-), preventing non-vesicular L-glutamate release. Functionally, multifunctional transporter that transports L-glutamate as well as multiple ions such as chloride, sodium and phosphate. At the synaptic vesicle membrane, mainly functions as an uniporter that mediates the uptake of L-glutamate into synaptic vesicles at presynaptic nerve terminals of excitatory neural cells. The L-glutamate uniporter activity is electrogenic and is driven by the proton electrochemical gradient, mainly by the electrical gradient established by the vacuolar H(+)-ATPase across the synaptic vesicle membrane. In addition, functions as a chloride channel that allows a chloride permeation through the synaptic vesicle membrane that affects the proton electrochemical gradient and promotes synaptic vesicles acidification. At the plasma membrane, following exocytosis, functions as a symporter of Na(+) and phosphate from the extracellular space to the cytoplasm allowing synaptic phosphate homeostasis regulation. The symporter activity is electrogenic. Moreover, operates synergistically with SLC18A3/VACHT under a constant H(+) gradient, thereby allowing striatal vesicular acetylcholine uptake. This chain is Vesicular glutamate transporter 3, found in Homo sapiens (Human).